The sequence spans 812 residues: Valine--tRNA ligase (812 aa).

The 'HIGH' region signature appears at P46–H56. Residues K536–S540 carry the 'KMSKS' region motif. K539 contacts ATP.

It belongs to the class-I aminoacyl-tRNA synthetase family. ValS type 2 subfamily. As to quaternary structure, monomer.

The protein resides in the cytoplasm. It carries out the reaction tRNA(Val) + L-valine + ATP = L-valyl-tRNA(Val) + AMP + diphosphate. In terms of biological role, catalyzes the attachment of valine to tRNA(Val). As ValRS can inadvertently accommodate and process structurally similar amino acids such as threonine, to avoid such errors, it has a 'posttransfer' editing activity that hydrolyzes mischarged Thr-tRNA(Val) in a tRNA-dependent manner. This chain is Valine--tRNA ligase, found in Rickettsia bellii (strain RML369-C).